A 358-amino-acid chain; its full sequence is 3-dehydroquinate synthase (358 aa).

NAD(+) contacts are provided by residues 70–75 (DGEQYK), 104–108 (GVIGD), 128–129 (TT), Lys-141, Lys-150, and 168–171 (CLHT). Zn(2+) contacts are provided by Glu-183, His-246, and His-263.

It belongs to the sugar phosphate cyclases superfamily. Dehydroquinate synthase family. Requires Co(2+) as cofactor. Zn(2+) serves as cofactor. NAD(+) is required as a cofactor.

It localises to the cytoplasm. It carries out the reaction 7-phospho-2-dehydro-3-deoxy-D-arabino-heptonate = 3-dehydroquinate + phosphate. The protein operates within metabolic intermediate biosynthesis; chorismate biosynthesis; chorismate from D-erythrose 4-phosphate and phosphoenolpyruvate: step 2/7. In terms of biological role, catalyzes the conversion of 3-deoxy-D-arabino-heptulosonate 7-phosphate (DAHP) to dehydroquinate (DHQ). The chain is 3-dehydroquinate synthase from Shewanella loihica (strain ATCC BAA-1088 / PV-4).